A 134-amino-acid chain; its full sequence is Probable glycine cleavage system H protein (134 aa).

Residues 29–110 (TVLVGITDYA…PYGAWIAKIK (82 aa)) enclose the Lipoyl-binding domain. Lys70 is modified (N6-lipoyllysine).

Belongs to the GcvH family. As to quaternary structure, the glycine cleavage system is composed of four proteins: P, T, L and H. Requires (R)-lipoate as cofactor.

The glycine cleavage system catalyzes the degradation of glycine. The H protein shuttles the methylamine group of glycine from the P protein to the T protein. The protein is Probable glycine cleavage system H protein of Pyrococcus abyssi (strain GE5 / Orsay).